Here is a 606-residue protein sequence, read N- to C-terminus: Alpha-1,2-mannosyltransferase MNN23 (606 aa).

The Cytoplasmic portion of the chain corresponds to 1-14; sequence MSINFLSIPRNRFK. Residues 15–35 form a helical membrane-spanning segment; the sequence is AIGVLSVTCILIYVILHSSII. Topologically, residues 36-606 are extracellular; the sequence is TTDFDVSDYG…QVAWLSKSQN (571 aa). The interval 59–86 is disordered; it reads DNGENLKDPQPELDNDKGNGETDTTTSN. Positions 62-78 are enriched in basic and acidic residues; that stretch reads ENLKDPQPELDNDKGNG.

It belongs to the MNN1/MNT family.

It is found in the golgi apparatus membrane. It functions in the pathway protein modification; protein glycosylation. Its function is as follows. Alpha-1,2-mannosyltransferase required for cell wall integrity. Responsible for addition of the first alpha-1,2-linked mannose to form the branches on the mannan backbone of oligosaccharides. Addition of alpha-1,2-mannose is required for stabilization of the alpha-1,6-mannose backbone and hence regulates mannan fibril length; and is important for both immune recognition and virulence. The protein is Alpha-1,2-mannosyltransferase MNN23 (MNN23) of Candida albicans (strain SC5314 / ATCC MYA-2876) (Yeast).